Reading from the N-terminus, the 211-residue chain is uncharacterized protein (211 aa).

Disordered regions lie at residues 1–73 and 96–123; these read MLRR…SKLK and TNAA…ASLS. 2 stretches are compositionally biased toward polar residues: residues 26 to 35 and 53 to 62; these read SKSSLISLTS and APSQFLSPTN. A compositionally biased stretch (low complexity) spans 63–73; it reads KRSTSSQSKLK. Ser-182 carries the phosphoserine modification. Position 184 is a phosphothreonine (Thr-184). The residue at position 186 (Ser-186) is a Phosphoserine.

This is an uncharacterized protein from Saccharomyces cerevisiae (strain ATCC 204508 / S288c) (Baker's yeast).